We begin with the raw amino-acid sequence, 353 residues long: Photosystem II D2 protein (353 aa).

Residue threonine 2 is modified to N-acetylthreonine. Threonine 2 bears the Phosphothreonine mark. Residues 41 to 61 (CAYFAVGGWFTGTTFVTSWYT) traverse the membrane as a helical segment. Position 118 (histidine 118) interacts with chlorophyll a. Residues 125 to 141 (GFMLRQFELARSVQLRP) form a helical membrane-spanning segment. Pheophytin a contacts are provided by glutamine 130 and asparagine 143. A helical membrane pass occupies residues 153-166 (VFVSVFLIYPLGQS). Residue histidine 198 coordinates chlorophyll a. A helical membrane pass occupies residues 208–228 (AALLCAIHGATVENTLFEDGD). Residues histidine 215 and phenylalanine 262 each contribute to the a plastoquinone site. Histidine 215 contacts Fe cation. Histidine 269 contributes to the Fe cation binding site. Residues 279 to 295 (GLWMSALGVVGLALNLR) form a helical membrane-spanning segment.

This sequence belongs to the reaction center PufL/M/PsbA/D family. In terms of assembly, PSII is composed of 1 copy each of membrane proteins PsbA, PsbB, PsbC, PsbD, PsbE, PsbF, PsbH, PsbI, PsbJ, PsbK, PsbL, PsbM, PsbT, PsbX, PsbY, PsbZ, Psb30/Ycf12, at least 3 peripheral proteins of the oxygen-evolving complex and a large number of cofactors. It forms dimeric complexes. The D1/D2 heterodimer binds P680, chlorophylls that are the primary electron donor of PSII, and subsequent electron acceptors. It shares a non-heme iron and each subunit binds pheophytin, quinone, additional chlorophylls, carotenoids and lipids. There is also a Cl(-1) ion associated with D1 and D2, which is required for oxygen evolution. The PSII complex binds additional chlorophylls, carotenoids and specific lipids. is required as a cofactor.

It is found in the plastid. Its subcellular location is the chloroplast thylakoid membrane. The enzyme catalyses 2 a plastoquinone + 4 hnu + 2 H2O = 2 a plastoquinol + O2. In terms of biological role, photosystem II (PSII) is a light-driven water:plastoquinone oxidoreductase that uses light energy to abstract electrons from H(2)O, generating O(2) and a proton gradient subsequently used for ATP formation. It consists of a core antenna complex that captures photons, and an electron transfer chain that converts photonic excitation into a charge separation. The D1/D2 (PsbA/PsbD) reaction center heterodimer binds P680, the primary electron donor of PSII as well as several subsequent electron acceptors. D2 is needed for assembly of a stable PSII complex. The chain is Photosystem II D2 protein from Guizotia abyssinica (Niger).